The sequence spans 426 residues: Nucleolar protein 12 (426 aa).

The disordered stretch occupies residues 26 to 128; sequence QSSGPVDTLE…SKRASRPDMK (103 aa). The segment covering 87 to 105 has biased composition (basic and acidic residues); sequence LEEKYMQQVLKEDSDHESE. RRM domains follow at residues 137–251 and 259–339; these read RTVF…SVAH and RSVF…RCRN. The span at 401-415 shows a compositional bias: basic residues; sequence KARSKTGRVTKRSQA. Residues 401–426 form a disordered region; sequence KARSKTGRVTKRSQAFKKAEANKKQK. Basic and acidic residues predominate over residues 417-426; the sequence is KKAEANKKQK.

The protein belongs to the RRM RBM34 family.

Its subcellular location is the nucleus. The protein resides in the nucleolus. Its function is as follows. Involved in pre-25S rRNA processing. The chain is Nucleolar protein 12 (NOP12) from Eremothecium gossypii (strain ATCC 10895 / CBS 109.51 / FGSC 9923 / NRRL Y-1056) (Yeast).